The sequence spans 384 residues: 5-cytosine rRNA methyltransferase NSUN4 (384 aa).

A mitochondrion-targeting transit peptide spans 1–25 (MAALTLRGVRELLKRVDLATVPRRH). S-adenosyl-L-methionine contacts are provided by G185, G186, K187, and D204. S206 is modified (phosphoserine). Positions 209, 237, 238, and 255 each coordinate S-adenosyl-L-methionine. The active-site Nucleophile is C310.

Belongs to the class I-like SAM-binding methyltransferase superfamily. RsmB/NOP family. In terms of assembly, heterodimer with MTERFD2/MTERF4; this interaction seems to be required for NSUN4 recruitment to the mitochondrial large ribosomal subunit.

Its subcellular location is the mitochondrion. It catalyses the reaction a cytidine in rRNA + S-adenosyl-L-methionine = a 5-methylcytidine in rRNA + S-adenosyl-L-homocysteine + H(+). It carries out the reaction a cytidine in mRNA + S-adenosyl-L-methionine = a 5-methylcytidine in mRNA + S-adenosyl-L-homocysteine + H(+). Mitochondrial RNA cytosine C(5)-methyltransferase that methylates cytosine to 5-methylcytosine (m5C) in various RNAs, such as rRNAs, mRNAs and some long non-coding RNAs (lncRNAs). Involved in mitochondrial ribosome small subunit (SSU) maturation by catalyzing methylation of mitochondrial 12S rRNA; the function is independent of MTERFD2/MTERF4 and assembled mitochondrial ribosome large subunit (LSU). Targeted to LSU by MTERFD2/MTERF4 and probably is involved in a final step in ribosome biogenesis to ensure that SSU and LSU are assembled. In vitro can methylate 16S rRNA of the LSU; the methylation is enhanced by MTERFD/MTERF4. Also acts as a regulator of innate immunity by marking double-stranded mitochondrial RNAs(mt-dsRNAs) generated in response to stress: catalyzes m5C modification on mitochondrial RNAs, such as a mRNAs and lncRNAs, with a preference for the termini of light-strand lncRNAs, promoting their degradation and cytosolic release. Modified light-strand lncRNAs are then recognized by C1QBP reader and recruited to the mitochondrial degradosome complex, which promotes their degradation. In Homo sapiens (Human), this protein is 5-cytosine rRNA methyltransferase NSUN4.